A 536-amino-acid polypeptide reads, in one-letter code: CBS domain-containing protein CBSCBSPB2 (536 aa).

The span at methionine 1–serine 23 shows a compositional bias: low complexity. The tract at residues methionine 1–arginine 60 is disordered. CBS domains follow at residues arginine 66–glutamate 124, methionine 132–lysine 187, valine 228–glutamate 287, and methionine 295–serine 354. One can recognise a PB1 domain in the interval valine 406–threonine 489. A helical membrane pass occupies residues valine 509 to valine 529.

It is found in the membrane. This is CBS domain-containing protein CBSCBSPB2 (CBSCBSPB2) from Arabidopsis thaliana (Mouse-ear cress).